The following is a 165-amino-acid chain: Nucleotide-binding protein Chy400_2003 (165 aa).

The protein belongs to the YajQ family.

Nucleotide-binding protein. In Chloroflexus aurantiacus (strain ATCC 29364 / DSM 637 / Y-400-fl), this protein is Nucleotide-binding protein Chy400_2003.